A 601-amino-acid polypeptide reads, in one-letter code: ATP-dependent lipid A-core flippase (601 aa).

Helical transmembrane passes span 26–46 (VGLF…QPML), 82–102 (LMIV…NYFL), 167–187 (VFLF…MVAI), and 263–283 (VYTP…LFLV). An ABC transmembrane type-1 domain is found at 30-321 (AVSILGYVIF…LSEVSSTIQR (292 aa)). Residues 353 to 589 (IEVRDLSFRY…GGHYARLHAM (237 aa)) form the ABC transporter domain. ATP is bound at residue 387-394 (GRSGSGKS).

Belongs to the ABC transporter superfamily. Lipid exporter (TC 3.A.1.106) family. In terms of assembly, homodimer.

It localises to the cell inner membrane. The enzyme catalyses ATP + H2O + lipid A-core oligosaccharideSide 1 = ADP + phosphate + lipid A-core oligosaccharideSide 2.. Involved in lipopolysaccharide (LPS) biosynthesis. Translocates lipid A-core from the inner to the outer leaflet of the inner membrane. Transmembrane domains (TMD) form a pore in the inner membrane and the ATP-binding domain (NBD) is responsible for energy generation. The polypeptide is ATP-dependent lipid A-core flippase (Aromatoleum aromaticum (strain DSM 19018 / LMG 30748 / EbN1) (Azoarcus sp. (strain EbN1))).